The chain runs to 198 residues: MKEFIIKANKAVTNGEINLKDLPGSSGRLDLLCRCVNSAFFLSHDMRRDTIFYSVNYGSPNPPVALKFVGSELKRVSPDERSIALFIKKALEKDASDLWKESTSGIYSSKREFRDIISEKKSEGKRIFYLHLNGKPLEDFEFKDDEDFLFVLGDHIGIGDEDEEFLEELGAEKISLSPLELHADHCIILVHNILDRLK.

S-adenosyl-L-methionine is bound by residues leucine 130, glycine 153, 176–181 (LSPLEL), and cysteine 186.

It belongs to the methyltransferase superfamily. TrmY family. As to quaternary structure, homodimer.

It is found in the cytoplasm. The enzyme catalyses pseudouridine(54) in tRNA + S-adenosyl-L-methionine = N(1)-methylpseudouridine(54) in tRNA + S-adenosyl-L-homocysteine + H(+). Its function is as follows. Specifically catalyzes the N1-methylation of pseudouridine at position 54 (Psi54) in tRNAs. The polypeptide is tRNA (pseudouridine(54)-N(1))-methyltransferase (Methanococcus maripaludis (strain C6 / ATCC BAA-1332)).